A 400-amino-acid chain; its full sequence is Dual specificity mitogen-activated protein kinase kinase 2 (400 aa).

N-acetylmethionine is present on methionine 1. The residue at position 23 (serine 23) is a Phosphoserine. The Protein kinase domain maps to 72–369 (FERISELGAG…LKMLTNHTFI (298 aa)). Residues 78 to 86 (LGAGNGGVV) and lysine 101 each bind ATP. Catalysis depends on aspartate 194, which acts as the Proton acceptor. Residues serine 222 and serine 226 each carry the (Microbial infection) O-acetylserine; by Yersinia YopJ; alternate modification. Serine 222 carries the post-translational modification Phosphoserine; by RAF; alternate. Residue serine 226 is modified to Phosphoserine; alternate. Positions 286 to 310 (GEEGEPHSISPRPRPPGRPVSGHGM) are disordered. Phosphoserine occurs at positions 293, 295, and 306. Threonine 394 and threonine 396 each carry phosphothreonine.

The protein belongs to the protein kinase superfamily. STE Ser/Thr protein kinase family. MAP kinase kinase subfamily. As to quaternary structure, interacts with MORG1. Interacts with SGK1. Interacts with KSR1. Interacts with KSR1 and BRAF; the interaction with KSR1 mediates KSR1-BRAF dimerization. Interacts with GLS. Mg(2+) serves as cofactor. Post-translationally, MAPKK is itself dependent on Ser/Thr phosphorylation for activity catalyzed by MAP kinase kinase kinases (RAF or MEKK1). Phosphorylated by MAP2K1/MEK1. (Microbial infection) Acetylation of Ser-222 and Ser-226 by Yersinia YopJ prevents phosphorylation and activation, thus blocking the MAPK signaling pathway.

It is found in the cytoplasm. Its subcellular location is the membrane. It carries out the reaction L-seryl-[protein] + ATP = O-phospho-L-seryl-[protein] + ADP + H(+). It catalyses the reaction L-threonyl-[protein] + ATP = O-phospho-L-threonyl-[protein] + ADP + H(+). The enzyme catalyses L-tyrosyl-[protein] + ATP = O-phospho-L-tyrosyl-[protein] + ADP + H(+). Catalyzes the concomitant phosphorylation of a threonine and a tyrosine residue in a Thr-Glu-Tyr sequence located in MAP kinases. Activates the ERK1 and ERK2 MAP kinases. Activates BRAF in a KSR1 or KSR2-dependent manner; by binding to KSR1 or KSR2 releases the inhibitory intramolecular interaction between KSR1 or KSR2 protein kinase and N-terminal domains which promotes KSR1 or KSR2-BRAF dimerization and BRAF activation. This is Dual specificity mitogen-activated protein kinase kinase 2 (MAP2K2) from Homo sapiens (Human).